Consider the following 427-residue polypeptide: Serine/threonine-protein kinase ssn3 (427 aa).

Positions 40–369 constitute a Protein kinase domain; it reads YHIVGFISSG…AQEALEHPYF (330 aa). ATP is bound by residues 46–54 and K70; that span reads ISSGTYGRV. The Proton acceptor role is filled by D172. A compositionally biased stretch (basic and acidic residues) spans 390–399; sequence RRVTQDDNDI. The tract at residues 390–427 is disordered; sequence RRVTQDDNDIRSGSLPGTKRSGLPDDSLLGRATKRLKE.

It belongs to the protein kinase superfamily. CMGC Ser/Thr protein kinase family. CDC2/CDKX subfamily. As to quaternary structure, component of the srb8-11 complex, a regulatory module of the Mediator complex. The cofactor is Mg(2+).

The protein localises to the nucleus. It carries out the reaction L-seryl-[protein] + ATP = O-phospho-L-seryl-[protein] + ADP + H(+). The catalysed reaction is L-threonyl-[protein] + ATP = O-phospho-L-threonyl-[protein] + ADP + H(+). The enzyme catalyses [DNA-directed RNA polymerase] + ATP = phospho-[DNA-directed RNA polymerase] + ADP + H(+). Its function is as follows. Component of the srb8-11 complex. The srb8-11 complex is a regulatory module of the Mediator complex which is itself involved in regulation of basal and activated RNA polymerase II-dependent transcription. The srb8-11 complex may be involved in the transcriptional repression of a subset of genes regulated by Mediator. It may inhibit the association of the Mediator complex with RNA polymerase II to form the holoenzyme complex. The srb8-11 complex phosphorylates the C-terminal domain (CTD) of the largest subunit of RNA polymerase II. The sequence is that of Serine/threonine-protein kinase ssn3 (ssn3) from Aspergillus niger (strain ATCC MYA-4892 / CBS 513.88 / FGSC A1513).